A 458-amino-acid polypeptide reads, in one-letter code: Phosphoglucosamine mutase (458 aa).

The active-site Phosphoserine intermediate is Ser106. Mg(2+) contacts are provided by Ser106, Asp247, Asp249, and Asp251. Residue Ser106 is modified to Phosphoserine.

It belongs to the phosphohexose mutase family. The cofactor is Mg(2+). In terms of processing, activated by phosphorylation.

The enzyme catalyses alpha-D-glucosamine 1-phosphate = D-glucosamine 6-phosphate. In terms of biological role, catalyzes the conversion of glucosamine-6-phosphate to glucosamine-1-phosphate. This chain is Phosphoglucosamine mutase, found in Chlamydia trachomatis serovar L2 (strain ATCC VR-902B / DSM 19102 / 434/Bu).